The following is a 193-amino-acid chain: NAD(P)H-quinone oxidoreductase subunit I (193 aa).

2 consecutive 4Fe-4S ferredoxin-type domains span residues 56-85 (GRIHFEFDKCIACEVCVRVCPINLPVVDWE) and 96-125 (KHYSIDFGVCIFCGNCVEYCPTNCLSMTEE). Positions 65, 68, 71, 75, 105, 108, 111, and 115 each coordinate [4Fe-4S] cluster. Residues 174–193 (NLPKGSQRAGQHPEDLVKAE) are disordered. A compositionally biased stretch (basic and acidic residues) spans 184–193 (QHPEDLVKAE).

Belongs to the complex I 23 kDa subunit family. As to quaternary structure, NDH-1 is composed of at least 11 different subunits. It depends on [4Fe-4S] cluster as a cofactor.

The protein localises to the cellular thylakoid membrane. It carries out the reaction a plastoquinone + NADH + (n+1) H(+)(in) = a plastoquinol + NAD(+) + n H(+)(out). It catalyses the reaction a plastoquinone + NADPH + (n+1) H(+)(in) = a plastoquinol + NADP(+) + n H(+)(out). Functionally, NDH-1 shuttles electrons from an unknown electron donor, via FMN and iron-sulfur (Fe-S) centers, to quinones in the respiratory and/or the photosynthetic chain. The immediate electron acceptor for the enzyme in this species is believed to be plastoquinone. Couples the redox reaction to proton translocation, and thus conserves the redox energy in a proton gradient. This is NAD(P)H-quinone oxidoreductase subunit I from Synechocystis sp. (strain ATCC 27184 / PCC 6803 / Kazusa).